The chain runs to 214 residues: Ependymin (214 aa).

Residues M1 to A20 form the signal peptide. 2 N-linked (GlcNAc...) asparagine glycosylation sites follow: N70 and N93.

This sequence belongs to the ependymin family. In terms of assembly, forms disulfide-linked dimers. Binds calcium through the terminal sialic acids.

The protein localises to the secreted. Functionally, may play a role in neural plasticity. May be involved during axon regeneration. The sequence is that of Ependymin (epd) from Notemigonus crysoleucas (Golden shiner).